The primary structure comprises 745 residues: Ankyrin repeat and protein kinase domain-containing protein 1 (745 aa).

The Protein kinase domain maps to 34-301 (EEEWHLVASG…NVAVETDMLL (268 aa)). ATP is bound by residues 40-48 (VASGGFSKV) and K63. The active-site Proton acceptor is the D157. ANK repeat units lie at residues 369-398 (NRVT…DVDC), 402-431 (SGYT…DTNL), 435-464 (DGWA…LVNA), 468-497 (EGWT…DLSP), 501-530 (EGKT…ELDA), 534-563 (NLRT…LPDA), 567-596 (SGYS…SLEL), 600-629 (QGWT…DLDA), 633-662 (MQWT…NPNA), 666-695 (SGWT…DIHA), and 699-728 (VGWT…QVDV).

The protein belongs to the protein kinase superfamily. TKL Ser/Thr protein kinase family.

The catalysed reaction is L-seryl-[protein] + ATP = O-phospho-L-seryl-[protein] + ADP + H(+). It catalyses the reaction L-threonyl-[protein] + ATP = O-phospho-L-threonyl-[protein] + ADP + H(+). In Mus musculus (Mouse), this protein is Ankyrin repeat and protein kinase domain-containing protein 1 (Ankk1).